A 231-amino-acid polypeptide reads, in one-letter code: ATP-dependent dethiobiotin synthetase BioD (231 aa).

12–17 is a binding site for ATP; that stretch reads EVGKTV. Thr-16 provides a ligand contact to Mg(2+). Lys-37 is an active-site residue. Ser-41 is a substrate binding site. ATP is bound by residues Asp-51, 112 to 115, and 202 to 204; these read EGAG and PKL. Asp-51 and Glu-112 together coordinate Mg(2+).

This sequence belongs to the dethiobiotin synthetase family. In terms of assembly, homodimer. Mg(2+) is required as a cofactor.

It localises to the cytoplasm. It carries out the reaction (7R,8S)-7,8-diammoniononanoate + CO2 + ATP = (4R,5S)-dethiobiotin + ADP + phosphate + 3 H(+). Its pathway is cofactor biosynthesis; biotin biosynthesis; biotin from 7,8-diaminononanoate: step 1/2. In terms of biological role, catalyzes a mechanistically unusual reaction, the ATP-dependent insertion of CO2 between the N7 and N8 nitrogen atoms of 7,8-diaminopelargonic acid (DAPA, also called 7,8-diammoniononanoate) to form a ureido ring. This is ATP-dependent dethiobiotin synthetase BioD from Bacillus subtilis subsp. natto.